Reading from the N-terminus, the 148-residue chain is Truncated transcription factor CAULIFLOWER C (148 aa).

The MADS-box domain occupies 1 to 61 (MGRGRVEMKR…GKLFEYSSES (61 aa)). Residues 90–148 (QTNWSMEYSRLKAKIELWERNQRHYLGEDLESISIKELQNLEQQLDTSLKHIPSRKVCK) enclose the K-box; partial domain.

As to quaternary structure, homodimer capable of binding to CArG-box sequences.

It is found in the nucleus. Functionally, probable transcription factor that promotes early floral meristem identity in synergy with APETALA1, FRUITFULL and LEAFY. Is required subsequently for the transition of an inflorescence meristem into a floral meristem. Seems to be partially redundant to the function of APETALA1. This Brassica oleracea var. botrytis (Cauliflower) protein is Truncated transcription factor CAULIFLOWER C (CAL-C).